Reading from the N-terminus, the 376-residue chain is Rhodopsin (376 aa).

The Extracellular portion of the chain corresponds to 1 to 51; it reads MSLINEPSYSAYSWGGQGGYGNQTVVDKVLPEMLHLIDPHWYQFPPMNPLW. Asparagine 22 carries an N-linked (GlcNAc...) asparagine glycan. The helical transmembrane segment at 52-76 threads the bilayer; that stretch reads HGLLGFVIGCLGFVSVVGNGMVIYI. Residues 77-88 are Cytoplasmic-facing; the sequence is FSTTKGLRTPSN. A helical transmembrane segment spans residues 89–113; it reads LLVVNLAFSDFLMMLSMSPPMVINC. At 114 to 128 the chain is on the extracellular side; sequence YYETWVLGPFMCELY. Cysteine 125 and cysteine 202 are oxidised to a cystine. Residues 129–148 form a helical membrane-spanning segment; it reads ALLGSLFGCGSIWTMVMIAL. At 149–167 the chain is on the cytoplasmic side; it reads DRYNVIVKGLAAKPMTNKT. The chain crosses the membrane as a helical span at residues 168–191; it reads AMLRILGIWAMSIAWTVFPLFGWN. Topologically, residues 192–215 are extracellular; the sequence is RYVPEGNMTACGTDYLNKEWVSRS. An N-linked (GlcNAc...) asparagine glycan is attached at asparagine 198. The chain crosses the membrane as a helical span at residues 216-243; that stretch reads YILVYSVFVYFLPLATIIYSYWFIVQAV. The Cytoplasmic portion of the chain corresponds to 244-278; the sequence is SAHEKQMREQAKKMNVASLRSAENANTSAECKLAK. Residues 279–302 form a helical membrane-spanning segment; the sequence is VALMTISLWFFAWTPYLVTDFSGI. The Extracellular portion of the chain corresponds to 303 to 309; it reads FEWGKIS. The helical transmembrane segment at 310-334 threads the bilayer; it reads PLATIWCSLFAKANAVYNPIVYGIS. At lysine 321 the chain carries N6-(retinylidene)lysine. At 335–376 the chain is on the cytoplasmic side; that stretch reads HPKYRAALNKKFPSLACASEPDDTASQASGATTVSDEKSASA. The interval 353-376 is disordered; it reads SEPDDTASQASGATTVSDEKSASA. The span at 358–368 shows a compositional bias: polar residues; it reads TASQASGATTV.

This sequence belongs to the G-protein coupled receptor 1 family. Opsin subfamily. Post-translationally, phosphorylated on some or all of the serine and threonine residues present in the C-terminal region.

The protein localises to the membrane. Its function is as follows. Visual pigments are the light-absorbing molecules that mediate vision. They consist of an apoprotein, opsin, covalently linked to cis-retinal. The chain is Rhodopsin from Sphodromantis sp. (Mantis).